A 434-amino-acid polypeptide reads, in one-letter code: Tol-Pal system protein TolB (434 aa).

A signal peptide spans 1–24 (MKFSAYLTTLFIVLFSLFIQTVQA).

It belongs to the TolB family. As to quaternary structure, the Tol-Pal system is composed of five core proteins: the inner membrane proteins TolA, TolQ and TolR, the periplasmic protein TolB and the outer membrane protein Pal. They form a network linking the inner and outer membranes and the peptidoglycan layer.

The protein localises to the periplasm. Functionally, part of the Tol-Pal system, which plays a role in outer membrane invagination during cell division and is important for maintaining outer membrane integrity. In Histophilus somni (strain 2336) (Haemophilus somnus), this protein is Tol-Pal system protein TolB.